The primary structure comprises 349 residues: N-lysine methyltransferase KMT5A (349 aa).

The interval A18–F46 is disordered. S57 bears the Phosphoserine mark. A disordered region spans residues R65–I207. A compositionally biased stretch (basic and acidic residues) spans V107–R119. At T138 the chain carries Phosphothreonine. Residues A154–Q170 are compositionally biased toward basic residues. Positions S192–I207 are enriched in basic and acidic residues. In terms of domain architecture, SET spans E213–G334. Residues K223–R225, Y268, and N295–H296 contribute to the S-adenosyl-L-methionine site.

The protein belongs to the class V-like SAM-binding methyltransferase superfamily. Histone-lysine methyltransferase family. PR/SET subfamily. In terms of assembly, interacts with L3MBTL1. Interacts with SIRT2 (phosphorylated form); the interaction is direct, stimulates KMT5A-mediated methyltransferase activity at histone H4 'Lys-20' (H4K20me1) and is increased in a H(2)O(2)-induced oxidative stress-dependent manner. In terms of processing, ubiquitinated and degraded by the DCX(DTL) complex.

It is found in the nucleus. Its subcellular location is the chromosome. The enzyme catalyses L-lysyl(20)-[histone H4] + S-adenosyl-L-methionine = N(6)-methyl-L-lysyl(20)-[histone H4] + S-adenosyl-L-homocysteine + H(+). It catalyses the reaction L-lysyl-[protein] + S-adenosyl-L-methionine = N(6)-methyl-L-lysyl-[protein] + S-adenosyl-L-homocysteine + H(+). In terms of biological role, protein-lysine N-methyltransferase that monomethylates both histones and non-histone proteins. Specifically monomethylates 'Lys-20' of histone H4 (H4K20me1). H4K20me1 is enriched during mitosis and represents a specific tag for epigenetic transcriptional repression. Mainly functions in euchromatin regions, thereby playing a central role in the silencing of euchromatic genes. Required for cell proliferation, probably by contributing to the maintenance of proper higher-order structure of DNA during mitosis. Involved in chromosome condensation and proper cytokinesis. Nucleosomes are preferred as substrate compared to free histones. Mediates monomethylation of p53/TP53 at 'Lys-382', leading to repress p53/TP53-target genes. Plays a negative role in TGF-beta response regulation and a positive role in cell migration. The protein is N-lysine methyltransferase KMT5A of Mus musculus (Mouse).